A 372-amino-acid polypeptide reads, in one-letter code: Spermidine/putrescine import ATP-binding protein PotA (372 aa).

An ABC transporter domain is found at 11–241 (IELRSIKKSY…PANLFVARFI (231 aa)). 43–50 (GPSGCGKT) contacts ATP.

Belongs to the ABC transporter superfamily. Spermidine/putrescine importer (TC 3.A.1.11.1) family. As to quaternary structure, the complex is composed of two ATP-binding proteins (PotA), two transmembrane proteins (PotB and PotC) and a solute-binding protein (PotD).

It localises to the cell inner membrane. The enzyme catalyses ATP + H2O + polyamine-[polyamine-binding protein]Side 1 = ADP + phosphate + polyamineSide 2 + [polyamine-binding protein]Side 1.. Functionally, part of the ABC transporter complex PotABCD involved in spermidine/putrescine import. Responsible for energy coupling to the transport system. The polypeptide is Spermidine/putrescine import ATP-binding protein PotA (Haemophilus influenzae (strain ATCC 51907 / DSM 11121 / KW20 / Rd)).